An 84-amino-acid polypeptide reads, in one-letter code: U7-ctenitoxin-Pn1a (84 aa).

A signal peptide spans 1 to 17 (MKLCILLVVLLITVVRA). A propeptide spanning residues 18–38 (EEDILENEAEDISPAIKERSA) is cleaved from the precursor. 4 disulfides stabilise this stretch: Cys-41–Cys-56, Cys-48–Cys-61, Cys-55–Cys-78, and Cys-63–Cys-76.

In terms of tissue distribution, expressed by the venom gland.

Its subcellular location is the secreted. Functionally, antagonist of L-type calcium channels (Cav1/CACNA1). Causes paralysis in the posterior limbs and gradual decreases in movement and aggression during 24 hours at dose levels of 5 ug per mouse. The polypeptide is U7-ctenitoxin-Pn1a (Phoneutria nigriventer (Brazilian armed spider)).